A 331-amino-acid chain; its full sequence is MHTNQLVDPFGRRITYLRLSVTDRCDFRCTYCMSEDMQFAPRQQILSLEELYAVADAFIGLGVRRIRITGGEPLVRKNLLSLLQRLGERDELDDLAITTNGSQLAEMAAPLRAAGVRRLNISLDSLQRERFAAFTRRDKLDQVLAGIDAARAAGFDRIKLNSVVQSGRNDDEVLDLVEFAVERGLDISFIEEMPLGSVVSHSREQTFCSSDEVRQRIEQRHALVRSSKVTGGPSRYWQVVGTQTQVGFISPHSHNFCGDCNRVRVTAEGKLVLCLGHDNALDLKRLLRAHPGDSERLRQALTEALRLKPERHHFATDEQVQVVRFMSMTGG.

In terms of domain architecture, Radical SAM core spans 9–233 (PFGRRITYLR…VRSSKVTGGP (225 aa)). Arg18 is a GTP binding site. [4Fe-4S] cluster is bound by residues Cys25 and Cys29. Position 31 (Tyr31) interacts with S-adenosyl-L-methionine. Cys32 is a [4Fe-4S] cluster binding site. A GTP-binding site is contributed by Arg67. Gly71 is an S-adenosyl-L-methionine binding site. A GTP-binding site is contributed by Thr98. Ser122 serves as a coordination point for S-adenosyl-L-methionine. Lys159 contributes to the GTP binding site. An S-adenosyl-L-methionine-binding site is contributed by Met193. Cys257 and Cys260 together coordinate [4Fe-4S] cluster. 262-264 (RVR) contacts GTP. Cys274 is a binding site for [4Fe-4S] cluster.

This sequence belongs to the radical SAM superfamily. MoaA family. In terms of assembly, monomer and homodimer. Requires [4Fe-4S] cluster as cofactor.

The enzyme catalyses GTP + AH2 + S-adenosyl-L-methionine = (8S)-3',8-cyclo-7,8-dihydroguanosine 5'-triphosphate + 5'-deoxyadenosine + L-methionine + A + H(+). It participates in cofactor biosynthesis; molybdopterin biosynthesis. Functionally, catalyzes the cyclization of GTP to (8S)-3',8-cyclo-7,8-dihydroguanosine 5'-triphosphate. The chain is GTP 3',8-cyclase from Ectopseudomonas mendocina (strain ymp) (Pseudomonas mendocina).